Reading from the N-terminus, the 86-residue chain is uncharacterized protein (86 aa).

This sequence to M.jannaschii MJ0526.1.

This is an uncharacterized protein from Methanothermobacter thermautotrophicus (strain ATCC 29096 / DSM 1053 / JCM 10044 / NBRC 100330 / Delta H) (Methanobacterium thermoautotrophicum).